Consider the following 61-residue polypeptide: Rubredoxin 3 (61 aa).

A Rubredoxin-like domain is found at 1 to 53; sequence MSSYRCPVCEYVYDESKGAPREGFPAGTPWDAVPDDWCCPDCGVREKLDFEPM. 4 residues coordinate Fe cation: C6, C9, C39, and C42.

It belongs to the rubredoxin family. Requires Fe(3+) as cofactor.

Involved in the hydrocarbon hydroxylating system, which transfers electrons from NADH to rubredoxin reductase and then through rubredoxin to alkane 1 monooxygenase. In Rhodococcus erythropolis (Arthrobacter picolinophilus), this protein is Rubredoxin 3 (rubA3).